The chain runs to 156 residues: Transcription elongation factor GreA (156 aa).

Residues 44–67 adopt a coiled-coil conformation; the sequence is ENAEYEAAKEKQAMIEGRIQDLCQ.

The protein belongs to the GreA/GreB family.

Necessary for efficient RNA polymerase transcription elongation past template-encoded arresting sites. The arresting sites in DNA have the property of trapping a certain fraction of elongating RNA polymerases that pass through, resulting in locked ternary complexes. Cleavage of the nascent transcript by cleavage factors such as GreA or GreB allows the resumption of elongation from the new 3'terminus. GreA releases sequences of 2 to 3 nucleotides. The chain is Transcription elongation factor GreA from Syntrophobacter fumaroxidans (strain DSM 10017 / MPOB).